The primary structure comprises 318 residues: Acetyl-coenzyme A carboxylase carboxyl transferase subunit alpha (318 aa).

The region spanning 38–292 (ALDRKAEEML…GEAIAAMLGE (255 aa)) is the CoA carboxyltransferase C-terminal domain.

Belongs to the AccA family. In terms of assembly, acetyl-CoA carboxylase is a heterohexamer composed of biotin carboxyl carrier protein (AccB), biotin carboxylase (AccC) and two subunits each of ACCase subunit alpha (AccA) and ACCase subunit beta (AccD).

The protein localises to the cytoplasm. It catalyses the reaction N(6)-carboxybiotinyl-L-lysyl-[protein] + acetyl-CoA = N(6)-biotinyl-L-lysyl-[protein] + malonyl-CoA. Its pathway is lipid metabolism; malonyl-CoA biosynthesis; malonyl-CoA from acetyl-CoA: step 1/1. In terms of biological role, component of the acetyl coenzyme A carboxylase (ACC) complex. First, biotin carboxylase catalyzes the carboxylation of biotin on its carrier protein (BCCP) and then the CO(2) group is transferred by the carboxyltransferase to acetyl-CoA to form malonyl-CoA. This is Acetyl-coenzyme A carboxylase carboxyl transferase subunit alpha from Paracoccus denitrificans (strain Pd 1222).